The sequence spans 454 residues: Transcription factor bHLH123 (454 aa).

The span at S101–S113 shows a compositional bias: low complexity. 4 disordered regions span residues S101–A127, A185–S228, A270–E348, and G398–E417. Composition is skewed to polar residues over residues A185–G195 and S207–S228. A compositionally biased stretch (basic and acidic residues) spans E303–N324. Residues K334 to L383 form the bHLH domain.

Homodimer.

It localises to the nucleus. The chain is Transcription factor bHLH123 (BHLH123) from Arabidopsis thaliana (Mouse-ear cress).